A 122-amino-acid chain; its full sequence is Large ribosomal subunit protein uL14 (122 aa).

This sequence belongs to the universal ribosomal protein uL14 family. As to quaternary structure, part of the 50S ribosomal subunit. Forms a cluster with proteins L3 and L19. In the 70S ribosome, L14 and L19 interact and together make contacts with the 16S rRNA in bridges B5 and B8.

Functionally, binds to 23S rRNA. Forms part of two intersubunit bridges in the 70S ribosome. This is Large ribosomal subunit protein uL14 from Petrotoga mobilis (strain DSM 10674 / SJ95).